A 296-amino-acid chain; its full sequence is Ribosomal protein L11 methyltransferase (296 aa).

Positions 145, 166, 188, and 230 each coordinate S-adenosyl-L-methionine.

It belongs to the methyltransferase superfamily. PrmA family.

It is found in the cytoplasm. It catalyses the reaction L-lysyl-[protein] + 3 S-adenosyl-L-methionine = N(6),N(6),N(6)-trimethyl-L-lysyl-[protein] + 3 S-adenosyl-L-homocysteine + 3 H(+). Functionally, methylates ribosomal protein L11. The polypeptide is Ribosomal protein L11 methyltransferase (Histophilus somni (strain 129Pt) (Haemophilus somnus)).